The primary structure comprises 129 residues: Transcription antitermination protein NusB (129 aa).

Belongs to the NusB family.

Involved in transcription antitermination. Required for transcription of ribosomal RNA (rRNA) genes. Binds specifically to the boxA antiterminator sequence of the ribosomal RNA (rrn) operons. In Staphylococcus aureus (strain MRSA252), this protein is Transcription antitermination protein NusB.